We begin with the raw amino-acid sequence, 684 residues long: MRALNSRLVLIDINSSWQASRRLISATATAFSSDSSSSFRRTRGARQRIASSKSPASSPSPVRRPSDGFSFDVRSPSSDSSISSRKSPTTAPPTVELDAFLEILPPATRKELVKHEAIEELIEVVMDLGRKPLARFPSGDWVISEQPVTHQDLELAVSKVGDFSDDNRSGIDRSLHRISAIRNRKLQVIGLTCRVGRVVSGSAEIIRDLIEGGGSILVIGSPGVGKTTLIREIARMLADEHRKRVVIVDTSNEIGGDGDVPHSGIGRARRMQVPNVNLQHDVMIEAVENHMPETIIIDEIGTELEALAASTIAQRGVQLVATAHGMTIDNIIKNPSLQILIGGIESVTLGDEEARKRKVQKTILERKGPPTFTCAVEMISRTECRVHQRLDVTVDAILAGKSAPFEIRQIRGEDDVPHKLVTPIPLENLEEEPAPLLNRDFVSELLSDDEDEDFLLIRSNKARSNTYTSPRSSPVHVYTYNVLEADLLQVAEVMGLDDEIEVTDDVGEADVILASSSELKQNSSIRRVAKLHKLPIFVIKSTTMAQMVKAVRMILGRESFGSAPKAIEKSSVDDIEIKDDAPESKPSLEELDALEEVRLAIEYIVIPGGEPVELLPRRSDIIVRQLELVESYQLAVENLGTHLNPRLQILPRRSTKKTLTSSSPQKSADGSMGTTGTRLPFLKD.

The transit peptide at 1 to 78 (MRALNSRLVL…FSFDVRSPSS (78 aa)) directs the protein to the chloroplast. The interval 33 to 91 (SDSSSSFRRTRGARQRIASSKSPASSPSPVRRPSDGFSFDVRSPSSDSSISSRKSPTTA) is disordered. Residues 50 to 88 (ASSKSPASSPSPVRRPSDGFSFDVRSPSSDSSISSRKSP) show a composition bias toward low complexity. 220-227 (GSPGVGKT) is an ATP binding site. The segment at 651–684 (PRRSTKKTLTSSSPQKSADGSMGTTGTRLPFLKD) is disordered. The segment covering 657 to 667 (KTLTSSSPQKS) has biased composition (low complexity).

Belongs to the ycf45 family.

It localises to the plastid. Its subcellular location is the chloroplast membrane. It is found in the chloroplast envelope. Required during eoplast (a highly reduced plastid type present during the degreening and dehydration stages of seed maturation) development in embryos and early stages of eoplast redifferentiation during seedling growth. This Arabidopsis thaliana (Mouse-ear cress) protein is Protein SEEDLING PLASTID DEVELOPMENT 1.